A 324-amino-acid polypeptide reads, in one-letter code: Zinc transporter ZIP1 (324 aa).

At 1–30 (MGPWGEPELLVWRPEAVASEPPVPVGLEVK) the chain is on the extracellular side. Residues 31–51 (LGALVLLLVLTLLCSLVPICV) traverse the membrane as a helical segment. The Cytoplasmic segment spans residues 52–68 (LRRPGANHEGSASRQKA). Residues 69–89 (LSLVSCFAGGVFLATCLLDLL) form a helical membrane-spanning segment. Topologically, residues 90–104 (PDYLAAIDEALAALH) are extracellular. Residues 105-125 (VTLQFPLQEFILAMGFFLVLV) form a helical membrane-spanning segment. Residues 126 to 179 (MEQITLAYKEQSGPSPLEETRALLGTVNGGPQHWHDGPGVPQASGAPATPSALR) are Cytoplasmic-facing. Residues 180 to 200 (ACVLVFSLALHSVFEGLAVGL) form a helical membrane-spanning segment. Over 201–206 (QRDRAR) the chain is Extracellular. Residues 207 to 227 (AMELCLALLLHKGILAVSLSL) traverse the membrane as a helical segment. The Cytoplasmic segment spans residues 228 to 237 (RLLQSHLRAQ). Residues 238–258 (VVAGCGILFSCMTPLGIGLGA) form a helical membrane-spanning segment. At 259–272 (ALAESAGPLHQLAQ) the chain is on the extracellular side. A helical transmembrane segment spans residues 273-293 (SVLEGMAAGTFLYITFLEILP). Topologically, residues 294–303 (QELASSEQRI) are cytoplasmic. A helical transmembrane segment spans residues 304 to 324 (LKVILLLAGFALLTGLLFIQI).

It belongs to the ZIP transporter (TC 2.A.5) family. As to expression, ubiquitous. Expressed in most adult and fetal tissues including the epidermis.

Its subcellular location is the cell membrane. It is found in the endoplasmic reticulum membrane. It carries out the reaction Zn(2+)(in) = Zn(2+)(out). With respect to regulation, inhibited by Ni(2+) ions. Fe(2+) ions do not inhibit zinc uptake. Functionally, transporter for the divalent cation Zn(2+). Mediates the influx of Zn(2+) into cells from extracellular space. Functions as the major importer of zinc from circulating blood plasma into prostate cells. The protein is Zinc transporter ZIP1 of Homo sapiens (Human).